Here is a 205-residue protein sequence, read N- to C-terminus: Small ribosomal subunit protein uS4 (205 aa).

The region spanning serine 94–isoleucine 157 is the S4 RNA-binding domain.

This sequence belongs to the universal ribosomal protein uS4 family. As to quaternary structure, part of the 30S ribosomal subunit. Contacts protein S5. The interaction surface between S4 and S5 is involved in control of translational fidelity.

One of the primary rRNA binding proteins, it binds directly to 16S rRNA where it nucleates assembly of the body of the 30S subunit. In terms of biological role, with S5 and S12 plays an important role in translational accuracy. The chain is Small ribosomal subunit protein uS4 from Rickettsia typhi (strain ATCC VR-144 / Wilmington).